Reading from the N-terminus, the 372-residue chain is Long-tail fiber protein gp35 (372 aa).

The GG-type lectin domain occupies N22 to T193.

As to quaternary structure, the long-tail fibers are trimeric, with a stoichiometry of gp34/gp37/gp36/gp35 of 3:3:3:1.

The protein resides in the virion. Its function is as follows. Structural component of the distal-half of the long-tail fiber. The long-tail fiber of T4 is about 1600 Angstroms long with a kink in the middle that divides the fiber into proximal and distal halves. The latter hinge is probably composed of gp35 protein. This is Long-tail fiber protein gp35 (35) from Enterobacteria phage T4 (Bacteriophage T4).